The chain runs to 614 residues: Acid phosphatase (614 aa).

An N-terminal signal peptide occupies residues 1–22 (MKGTAASALLVALSATAAQARP). The Fibronectin type-III domain maps to 80–176 (IPKGMHIHYQ…EVLSFKTSRP (97 aa)). N110, N161, N242, N295, N333, N340, N352, N408, N429, N512, N523, N559, and N578 each carry an N-linked (GlcNAc...) asparagine glycan. Residues 606–614 (VAGGKKLHS) constitute a propeptide that is removed on maturation.

As to quaternary structure, monomer. Requires Cu cation as cofactor. Post-translationally, glycosylated; probably with N-linked high-mannose oligosaccharides.

The protein resides in the secreted. It carries out the reaction a phosphate monoester + H2O = an alcohol + phosphate. Competitively inhibited by phosphomycin and inorganic orthophosphate. In Aspergillus ficuum, this protein is Acid phosphatase (aphA).